Reading from the N-terminus, the 431-residue chain is Histidinol dehydrogenase (431 aa).

NAD(+) contacts are provided by Tyr127, Gln189, and Asn212. 3 residues coordinate substrate: Ser237, Gln259, and His262. Zn(2+) is bound by residues Gln259 and His262. Active-site proton acceptor residues include Glu326 and His327. Substrate contacts are provided by His327, Asp360, Glu414, and His419. Residue Asp360 coordinates Zn(2+). His419 provides a ligand contact to Zn(2+).

It belongs to the histidinol dehydrogenase family. Zn(2+) is required as a cofactor.

The enzyme catalyses L-histidinol + 2 NAD(+) + H2O = L-histidine + 2 NADH + 3 H(+). The protein operates within amino-acid biosynthesis; L-histidine biosynthesis; L-histidine from 5-phospho-alpha-D-ribose 1-diphosphate: step 9/9. Its function is as follows. Catalyzes the sequential NAD-dependent oxidations of L-histidinol to L-histidinaldehyde and then to L-histidine. The chain is Histidinol dehydrogenase from Xanthomonas euvesicatoria pv. vesicatoria (strain 85-10) (Xanthomonas campestris pv. vesicatoria).